Reading from the N-terminus, the 105-residue chain is Vacuolar ATPase assembly integral membrane protein VMA21 homolog (105 aa).

The disordered stretch occupies residues 1–26 (MSTKNKKAAGGNGGAPKQTRQQSHDS). The Cytoplasmic segment spans residues 1–36 (MSTKNKKAAGGNGGAPKQTRQQSHDSQDYSSFKTVL). Residues 37-57 (FYCMLIVFLPVLTFFVLKGFV) form a helical membrane-spanning segment. The Lumenal portion of the chain corresponds to 58 to 68 (LDQFLDISEVK). Residues 69 to 89 (VNIASAVGAVVALHIALGLYI) form a helical membrane-spanning segment. Topologically, residues 90–105 (YRAYFGAPGSKGSKTD) are cytoplasmic.

The protein belongs to the VMA21 family.

It is found in the endoplasmic reticulum membrane. It localises to the endoplasmic reticulum-Golgi intermediate compartment membrane. The protein resides in the cytoplasmic vesicle. The protein localises to the COPII-coated vesicle membrane. Required for the assembly of the V0 complex of the vacuolar ATPase (V-ATPase) in the endoplasmic reticulum. This Drosophila simulans (Fruit fly) protein is Vacuolar ATPase assembly integral membrane protein VMA21 homolog.